The following is a 522-amino-acid chain: MEELQGYFEKDRSRQQPFLYPLLFQEYIYALAHDRGLNRNGSIFYEPLEVFGYDSKSSLALVKRLIIRIYQQHFFLSSVNDSNQNRFVGHHHTNFFYSRFYSQMISEGFAIIVEIPFSLQLVSYLKEKEIPKYHNLRSIHSIFPFFEDKLLHFNYVSDILIPHPIHMEILVQILQCWIQDVPLLHFLRFFLHEYTNWNSFFITQNKSIYRFSKETKRLFRFLYNYYVYECEFVFVFIRKHSSYLRFTSFRTFLERRYFYGKMEHLQTEHLIIVCCYYFNGTLWSFKDPFMHYARCQGKAILASKGTHLLMKKWKYNFVNLWQYYFHFWYQSYRIHINQLSNHSFHFLGYLSSLLKNYSTVRNKMLDNSFLIDTLTTQFDTAVPVIFLIGALSKAQFCTVSGHPISKPIWTDLSDSGIIERFGRICRNLSHYHSGSSKKQGLYRIKYILRLSCARTLARKHKSTVRTFLQRLGSGLLEEFFTEREQDLSLILPKAITFPFQGSRRERIWYLDIIRINDLLNRS.

It belongs to the intron maturase 2 family. MatK subfamily.

The protein localises to the plastid. It localises to the chloroplast. Functionally, usually encoded in the trnK tRNA gene intron. Probably assists in splicing its own and other chloroplast group II introns. This is Maturase K from Gladiolus papilio (Goldblotch gladiolus).